The primary structure comprises 427 residues: Glutamate-1-semialdehyde 2,1-aminomutase (427 aa).

The residue at position 265 (lysine 265) is an N6-(pyridoxal phosphate)lysine.

This sequence belongs to the class-III pyridoxal-phosphate-dependent aminotransferase family. HemL subfamily. In terms of assembly, homodimer. Requires pyridoxal 5'-phosphate as cofactor.

Its subcellular location is the cytoplasm. The enzyme catalyses (S)-4-amino-5-oxopentanoate = 5-aminolevulinate. It functions in the pathway porphyrin-containing compound metabolism; protoporphyrin-IX biosynthesis; 5-aminolevulinate from L-glutamyl-tRNA(Glu): step 2/2. The polypeptide is Glutamate-1-semialdehyde 2,1-aminomutase (Burkholderia lata (strain ATCC 17760 / DSM 23089 / LMG 22485 / NCIMB 9086 / R18194 / 383)).